The chain runs to 245 residues: 5-oxoprolinase subunit A (245 aa).

The protein belongs to the LamB/PxpA family. Forms a complex composed of PxpA, PxpB and PxpC.

The catalysed reaction is 5-oxo-L-proline + ATP + 2 H2O = L-glutamate + ADP + phosphate + H(+). Functionally, catalyzes the cleavage of 5-oxoproline to form L-glutamate coupled to the hydrolysis of ATP to ADP and inorganic phosphate. This is 5-oxoprolinase subunit A from Haemophilus influenzae (strain PittGG).